A 183-amino-acid polypeptide reads, in one-letter code: Ribosome-recycling factor (183 aa).

Belongs to the RRF family.

The protein resides in the cytoplasm. Its function is as follows. Responsible for the release of ribosomes from messenger RNA at the termination of protein biosynthesis. May increase the efficiency of translation by recycling ribosomes from one round of translation to another. The chain is Ribosome-recycling factor from Ureaplasma urealyticum serovar 10 (strain ATCC 33699 / Western).